A 165-amino-acid chain; its full sequence is MKTPRLPIALQQAVMRCLREKLAQANLKLGRNYPEPKLVYQQRGTSAGTAWLESYEIRLNPVLMMENQQAFVDEVVPHELAHLLVWKHFGRVAPHGKEWKWMMEAVLGVPARRTHQFELESVRRNTFPYRCQCQQHQLTVRRHNRVVRGEATYRCVKCGEPLVAE.

The SprT-like domain occupies 19-163 (REKLAQANLK…RCVKCGEPLV (145 aa)). His78 contacts Zn(2+). Glu79 is a catalytic residue. Residue His82 participates in Zn(2+) binding.

Belongs to the SprT family. Requires Zn(2+) as cofactor.

Its subcellular location is the cytoplasm. The polypeptide is Protein SprT (Enterobacter sp. (strain 638)).